The sequence spans 172 residues: Large ribosomal subunit protein uL10 (172 aa).

This sequence belongs to the universal ribosomal protein uL10 family. As to quaternary structure, part of the ribosomal stalk of the 50S ribosomal subunit. The N-terminus interacts with L11 and the large rRNA to form the base of the stalk. The C-terminus forms an elongated spine to which L12 dimers bind in a sequential fashion forming a multimeric L10(L12)X complex.

Functionally, forms part of the ribosomal stalk, playing a central role in the interaction of the ribosome with GTP-bound translation factors. This is Large ribosomal subunit protein uL10 (rplJ) from Liberibacter africanus (Citrus greening disease).